The chain runs to 291 residues: MEMO1 family protein TON_0132 (291 aa).

It belongs to the MEMO1 family.

This is MEMO1 family protein TON_0132 from Thermococcus onnurineus (strain NA1).